A 53-amino-acid chain; its full sequence is Ovomucoid (53 aa).

One can recognise a Kazal-like domain in the interval Val-3–Cys-53. Disulfide bonds link Cys-5/Cys-35, Cys-13/Cys-32, and Cys-21/Cys-53. An N-linked (GlcNAc...) asparagine glycan is attached at Asn-42.

The protein resides in the secreted. This is Ovomucoid from Turnix sylvaticus (Common buttonquail).